We begin with the raw amino-acid sequence, 253 residues long: Major prion protein (253 aa).

The first 22 residues, 1 to 22 (MANLGCWMLVLFVATWSNLGLC), serve as a signal peptide directing secretion. Positions 23–38 (KKRPKPGGWNTGGSRY) are interaction with ADGRG6. The interaction with GRB2, ERI3 and SYN1 stretch occupies residues 23–230 (KKRPKPGGWN…ESQAYYQRGS (208 aa)). The tract at residues 25 to 108 (RPKPGGWNTG…WNKPSKPKTN (84 aa)) is disordered. Repeat copies occupy residues 51–59 (PQGGGGWGQ), 60–67 (PHGGGWGQ), 68–75 (PHGGGWGQ), 76–83 (PHGGGWGQ), and 84–91 (PHGGGWGQ). Residues 51–91 (PQGGGGWGQPHGGGWGQPHGGGWGQPHGGGWGQPHGGGWGQ) are 5 X 8 AA tandem repeats of P-H-G-G-G-W-G-Q. Residues 52 to 95 (QGGGGWGQPHGGGWGQPHGGGWGQPHGGGWGQPHGGGWGQGGGT) are compositionally biased toward gly residues. Residues His61, Gly62, Gly63, His69, Gly70, Gly71, His77, Gly78, Gly79, His85, Gly86, and Gly87 each contribute to the Cu(2+) site. A disulfide bridge links Cys179 with Cys214. N-linked (GlcNAc...) asparagine glycans are attached at residues Asn181 and Asn197. A lipid anchor (GPI-anchor amidated serine) is attached at Ser230. Positions 231 to 253 (SMVLFSSPPVILLISFLIFLIVG) are cleaved as a propeptide — removed in mature form.

Belongs to the prion family. Monomer and homodimer. Has a tendency to aggregate into amyloid fibrils containing a cross-beta spine, formed by a steric zipper of superposed beta-strands. Soluble oligomers may represent an intermediate stage on the path to fibril formation. Copper binding may promote oligomerization. Interacts with GRB2, APP, ERI3/PRNPIP and SYN1. Mislocalized cytosolically exposed PrP interacts with MGRN1; this interaction alters MGRN1 subcellular location and causes lysosomal enlargement. Interacts with APP. Interacts with KIAA1191. Interacts with ADGRG6.

The protein resides in the cell membrane. It is found in the golgi apparatus. In terms of biological role, its primary physiological function is unclear. May play a role in neuronal development and synaptic plasticity. May be required for neuronal myelin sheath maintenance. May promote myelin homeostasis through acting as an agonist for ADGRG6 receptor. May play a role in iron uptake and iron homeostasis. Soluble oligomers are toxic to cultured neuroblastoma cells and induce apoptosis (in vitro). Association with GPC1 (via its heparan sulfate chains) targets PRNP to lipid rafts. Also provides Cu(2+) or Zn(2+) for the ascorbate-mediated GPC1 deaminase degradation of its heparan sulfate side chains. This chain is Major prion protein (PRNP), found in Pongo pygmaeus (Bornean orangutan).